The following is a 319-amino-acid chain: MSPSDDPISSIFFERQQAALCAQHALNMLLQDSLFTYENLRDLARQMDQMEHDILGNNANAVGRSENMNDSGFFSIQVIEKALETFDLKLINMENPAMAEFKANPLTARAYVLNLREHWFVLRKFGNQWFELNSVKNGPKLLTDTYVKEYLHQFAAENYSIFVVQGILPNSEADDFITLCPVVPKPTDFDKKEPNLVQKFFNSVGRRLGGSQEIPDSQEDRDLAIAMALSMESKESSESSGSDEDQLAKAIEMSLSQDPNIPSTSAAPSELTETPILGPSTSSETPSGRIPSAEQQRRDRAKFLEKLEEEKKSQNVPEE.

Positions 8–179 constitute a Josephin domain; it reads ISSIFFERQQ…NSEADDFITL (172 aa). Catalysis depends on cysteine 21, which acts as the Nucleophile. Residue histidine 118 is the Proton acceptor of the active site. The active site involves asparagine 133. UIM domains are found at residues 218 to 237 and 242 to 261; these read QEDRDLAIAMALSMESKESS and SDEDQLAKAIEMSLSQDPNI. Residues 253–319 are disordered; it reads MSLSQDPNIP…EKKSQNVPEE (67 aa). A compositionally biased stretch (polar residues) spans 254 to 267; it reads SLSQDPNIPSTSAA. The segment covering 295–313 has biased composition (basic and acidic residues); it reads QQRRDRAKFLEKLEEEKKS. The segment at 297–300 is interaction with cdc-48.1 and cdc-48.2; sequence RRDR.

As to quaternary structure, forms a complex composed of deubiquitinating enzyme atx-3, adapter ubxn-5 and cdc-48.1. Forms a complex composed of deubiquitinating enzyme atx-3, E4 ubiquitin-protein ligase ufd-2 and cdc-48.1. Interacts (via RRDR motif) with cdc-48.1 (via N-terminus) and cdc-48.2 (via N-terminus); the interaction with cdc-48.1 is not required for atx-3 enzymatic activity. Interacts (via C-terminus) with ubxn-5. May interact with ned-8.

Its subcellular location is the cytoplasm. It is found in the nucleus. The protein resides in the nucleolus. It catalyses the reaction Thiol-dependent hydrolysis of ester, thioester, amide, peptide and isopeptide bonds formed by the C-terminal Gly of ubiquitin (a 76-residue protein attached to proteins as an intracellular targeting signal).. Its function is as follows. Acts as a chain editing deubiquitinating enzyme that binds and cleaves 'Lys-48'-linked polyubiquitin chains, with a preference for chains containing four or more ubiquitin molecules thereby modulating protein degradation by the ubiquitin-proteasome pathway. Probably by regulating the IGF-1-insulin-like pathway, regulates lifespan. Regulates germline DNA double-strand-break repair and apoptosis in response to DNA damage by recruiting E4 ubiquitin-protein ligase ufd-2 to DNA repair foci. Interacts with key regulators of transcription and represses transcription. Acts as a histone-binding protein that regulates transcription. The polypeptide is Ataxin-3 homolog (Caenorhabditis briggsae).